Here is a 64-residue protein sequence, read N- to C-terminus: Large ribosomal subunit protein bL33m (64 aa).

This sequence belongs to the bacterial ribosomal protein bL33 family. Component of the mitochondrial ribosome large subunit (39S) which comprises a 16S rRNA and about 50 distinct proteins.

It is found in the mitochondrion. The polypeptide is Large ribosomal subunit protein bL33m (mRpL33) (Drosophila melanogaster (Fruit fly)).